The chain runs to 122 residues: Large ribosomal subunit protein uL14 (122 aa).

This sequence belongs to the universal ribosomal protein uL14 family. As to quaternary structure, part of the 50S ribosomal subunit. Forms a cluster with proteins L3 and L19. In the 70S ribosome, L14 and L19 interact and together make contacts with the 16S rRNA in bridges B5 and B8.

Binds to 23S rRNA. Forms part of two intersubunit bridges in the 70S ribosome. The chain is Large ribosomal subunit protein uL14 from Lachnospira eligens (strain ATCC 27750 / DSM 3376 / VPI C15-48 / C15-B4) (Eubacterium eligens).